Reading from the N-terminus, the 60-residue chain is Large ribosomal subunit protein bL32 (60 aa).

This sequence belongs to the bacterial ribosomal protein bL32 family.

The protein is Large ribosomal subunit protein bL32 of Streptococcus mutans serotype c (strain ATCC 700610 / UA159).